Here is a 357-residue protein sequence, read N- to C-terminus: Prostaglandin D2 receptor-like (357 aa).

Residues 1–20 (MNESYRCQAATWVERGSSAT) lie on the Extracellular side of the membrane. An N-linked (GlcNAc...) asparagine glycan is attached at N2. Residues 21-41 (MGGVLFSAGLLGNLLALVLLA) traverse the membrane as a helical segment. Residues 42-57 (RSGLGSCRPGPLHPPP) are Cytoplasmic-facing. A helical membrane pass occupies residues 58-78 (SVFYVLVCGLTVTHLLGKCLI). Residues 79-106 (SPMVLAAYAQNRSLKELLPASGNQLCEA) lie on the Extracellular side of the membrane. The N-linked (GlcNAc...) asparagine glycan is linked to N89. Residues C104 and C182 are joined by a disulfide bond. The helical transmembrane segment at 107–127 (FAFLMSFFGLASTLQLLAMAL) threads the bilayer. At 128-149 (ECWLSLGHPFFYQRHITARRGV) the chain is on the cytoplasmic side. The helical transmembrane segment at 150 to 170 (LVAPVAGAFSLAFCALPFAGF) threads the bilayer. Topologically, residues 171 to 194 (GKFVQYCPGTWCFIQMIHKKRSFS) are extracellular. Residues 195–215 (VIGFSVLYSSLMALLVLATVV) form a helical membrane-spanning segment. The Cytoplasmic portion of the chain corresponds to 216–261 (CNLGAMSNLYAMHRRQRHHPRRCSRDRAQSGSDYRHGSPNPLEELD). Residues 262 to 282 (HFVLLALTTVLFTMCSLPLIY) traverse the membrane as a helical segment. Residues 283–306 (RAYYGAFKLVDRADGDSEDLQALR) are Extracellular-facing. Residues 307–327 (FLSVISIVDPWIFIIFRTSVF) form a helical membrane-spanning segment. Topologically, residues 328 to 357 (RMLFHKAFTRPLIYRNWCSHSWQTNMESTL) are cytoplasmic.

This sequence belongs to the G-protein coupled receptor 1 family. Strongly expressed in eye and gastrointestinal tract (GIT), moderately in the brain and oviduct and weakly in the epididymis. In the eye, expressed in the epithelium of the iris and ciliary body and in photoreceptor cells of the retina. In the brain, expressed in leptomeninges, choroid plexus and spinal cord (sensory and motor neurons of the dorsal and ventral horns). In the stomach, expressed in the mucous-secreting goblet cells and the columnar epithelium. Expressed in platelets.

The protein resides in the cell membrane. Receptor for prostaglandin D2 (PGD2). The activity of this receptor is mainly mediated by G(s) proteins that stimulate adenylate cyclase, resulting in an elevation of intracellular cAMP. A mobilization of calcium is also observed, but without formation of inositol 1,4,5-trisphosphate. The polypeptide is Prostaglandin D2 receptor-like (Ptgdrl) (Rattus norvegicus (Rat)).